The sequence spans 129 residues: Aspartate 1-decarboxylase (129 aa).

Ser25 (schiff-base intermediate with substrate; via pyruvic acid) is an active-site residue. Position 25 is a pyruvic acid (Ser) (Ser25). Residue Thr57 coordinates substrate. The active-site Proton donor is Tyr58. 73 to 75 (GAA) contacts substrate.

The protein belongs to the PanD family. Heterooctamer of four alpha and four beta subunits. Requires pyruvate as cofactor. Post-translationally, is synthesized initially as an inactive proenzyme, which is activated by self-cleavage at a specific serine bond to produce a beta-subunit with a hydroxyl group at its C-terminus and an alpha-subunit with a pyruvoyl group at its N-terminus.

It localises to the cytoplasm. It carries out the reaction L-aspartate + H(+) = beta-alanine + CO2. Its pathway is cofactor biosynthesis; (R)-pantothenate biosynthesis; beta-alanine from L-aspartate: step 1/1. Catalyzes the pyruvoyl-dependent decarboxylation of aspartate to produce beta-alanine. This chain is Aspartate 1-decarboxylase, found in Hydrogenovibrio crunogenus (strain DSM 25203 / XCL-2) (Thiomicrospira crunogena).